We begin with the raw amino-acid sequence, 93 residues long: MNNTNLILENARDWHVVGLIVQGNPKKLSAIQTALLAIEHTEIPTLDEKLGKFVVVMQSNDQHLLLEKMESVKDIDGVINVSLVYHEQDEQNK.

It belongs to the NapD family. As to quaternary structure, interacts with the cytoplasmic NapA precursor.

The protein localises to the cytoplasm. Chaperone for NapA, the catalytic subunit of the periplasmic nitrate reductase. It binds directly and specifically to the twin-arginine signal peptide of NapA, preventing premature interaction with the Tat translocase and premature export. The protein is Chaperone NapD of Haemophilus influenzae (strain ATCC 51907 / DSM 11121 / KW20 / Rd).